Reading from the N-terminus, the 670-residue chain is MDFPGHFEQIFQQLNYQRLHGQLCDCVIVVGNRHFKAHRSVLAACSTHFRALFSVAEGDQTMNMIQLDSEVVTAEAFAALIDMMYTSTLMLGESNVMDVLLAASHLHLNSVVKACKHYLTTRTLPMSPSSERAQEQSARMQRSFMLQQLGLSIVSSALSSSQSAEEPTAPMSSSMRSSLDQRTPFPMRRLHKRKQSVEERARQRLRSSMEESAISDVTPESGPAGVHSREEFFSPDSLKIVDNPKPDGMADNQEDGAMMFDRPFGAQEDAQVPSQSDGSAGNMASRATQVETSFEQEAVAEKGSFQCENPEVGLGEKEHMRVVVKSEPLSSPEPQDEVSDVTSQAEGSESVEVEGVVVSAEKIDLSPESSDRSFSDPQSSTDRVGDIHILEVTNNLEHKTSFSISNFLNKSRGSNFSASQSTDDNLPNTTSDCRLEGEAPYLLSPEAGPAGGPSSAPGSHVENPFSEPADSHFVRPMQEVMGLPCVQTSGYQGEQFGMDFSRSGLGLHSSFSRAMMGSPRGGASNFPYYRRIAPKMPVVTSVRSSQISENSASSQLMMNGATSFENGHTSQPGPPQLTRASADVLSKCKKALSEHNVLVVEGARKYACKICCKTFLTLTDCKKHIRVHTGEKPYACLKCGKRFSQSSHLYKHSKTTCLRWQSSNLPSTLL.

Residues 24-93 form the BTB domain; it reads CDCVIVVGNR…MYTSTLMLGE (70 aa). 2 disordered regions span residues 158 to 256 and 268 to 382; these read LSSS…QEDG and EDAQ…SSTD. Over residues 170–181 the composition is skewed to polar residues; the sequence is PMSSSMRSSLDQ. A Phosphoserine modification is found at Ser234. A Glycyl lysine isopeptide (Lys-Gly) (interchain with G-Cter in SUMO2) cross-link involves residue Lys239. Over residues 285 to 295 the composition is skewed to polar residues; it reads SRATQVETSFE. Residues Lys317 and Lys325 each participate in a glycyl lysine isopeptide (Lys-Gly) (interchain with G-Cter in SUMO2) cross-link. Positions 345 to 360 are enriched in low complexity; sequence AEGSESVEVEGVVVSA. Residues 361 to 374 show a composition bias toward basic and acidic residues; it reads EKIDLSPESSDRSF. Ser366 is modified (phosphoserine). Glycyl lysine isopeptide (Lys-Gly) (interchain with G-Cter in SUMO2) cross-links involve residues Lys399 and Lys410. Residues 414-432 show a composition bias toward polar residues; sequence SNFSASQSTDDNLPNTTSD. Disordered stretches follow at residues 414-433 and 442-470; these read SNFSASQSTDDNLPNTTSDC and LLSPEAGPAGGPSSAPGSHVENPFSEPAD. Residues 444–459 are compositionally biased toward low complexity; that stretch reads SPEAGPAGGPSSAPGS. Residues Lys535, Lys587, and Lys590 each participate in a glycyl lysine isopeptide (Lys-Gly) (interchain with G-Cter in SUMO2) cross-link. Residues 606-628 form a C2H2-type 1 zinc finger; it reads YACKICCKTFLTLTDCKKHIRVH. The C2H2-type 2; atypical zinc-finger motif lies at 634 to 657; sequence YACLKCGKRFSQSSHLYKHSKTTC. Residues Lys638 and Lys651 each participate in a glycyl lysine isopeptide (Lys-Gly) (interchain with G-Cter in SUMO2) cross-link.

The protein resides in the nucleus. Its function is as follows. May be involved in transcriptional regulation. This chain is Zinc finger and BTB domain-containing protein 5 (Zbtb5), found in Mus musculus (Mouse).